The chain runs to 281 residues: Oxidase pynE (281 aa).

This sequence belongs to the avfA family.

It functions in the pathway secondary metabolite biosynthesis. Oxidase; part of the gene cluster that mediates the biosynthesis of pyranonigrins, a family of antioxidative compounds. The first step of pyranonigrins biosynthesis is performed by the hybrid PKS-NRPS synthetase that condenses 6 malonyl-CoA units to an acetyl starter unit, to form a 1,3,5-trioxotetradecane-6,8-dienyl-ACP. The enoyl reductase (ER) domain of pynA is likely to be functional during the first two rounds of polyketide chain extension, to generate the saturated C-C bonds of the alkyl side chain. PynA subsequently forms the amide bond between the acyl chain and L-serine. Although pynA has a terminal reductase domain, it appears to require the thioesterase pynI for the release of the straight-chain intermediate from pynA via the formation of a tetramic acid pyranonigrin J. The methyltransferase pynC then coverts pyranonigrin J to pyranonigrin I via N-methylation. The FAD-dependent monooxygenase pynG catalyzes an epoxidation-mediated cyclization to form the dihydro-gamma-pyrone moiety, followed by pynD-catalyzed oxidation of the alcohol to the ketone and enolization to yield the characteristic tetramic acid-fused gamma-pyrone core of pyranonigrin H. Pyranonigrin H is substrate of pynH for dehydration-mediated exo-methylene formation from the serine side chain to produce pyranonigrin E, before the oxidase pynE reduces the exo-methylene of pyranonigrin E into a pendant methyl to form pyranonigrin G. The FAD-linked oxidoreductase pynB performs the reverse reaction and converts pyranonigrin G back to pyranonigrin E. This is Oxidase pynE from Aspergillus niger (strain ATCC MYA-4892 / CBS 513.88 / FGSC A1513).